Reading from the N-terminus, the 233-residue chain is Sugar fermentation stimulation protein homolog (233 aa).

The protein belongs to the SfsA family.

This Acetivibrio thermocellus (strain ATCC 27405 / DSM 1237 / JCM 9322 / NBRC 103400 / NCIMB 10682 / NRRL B-4536 / VPI 7372) (Clostridium thermocellum) protein is Sugar fermentation stimulation protein homolog.